The chain runs to 707 residues: Polyribonucleotide nucleotidyltransferase (707 aa).

Residues D488 and D494 each coordinate Mg(2+). The 61-residue stretch at 555–615 (PIIKVTKIDP…ENVDNAIALI (61 aa)) folds into the KH domain. The 68-residue stretch at 625–692 (GEILEGKITR…DLGRLQFKRV (68 aa)) folds into the S1 motif domain.

The protein belongs to the polyribonucleotide nucleotidyltransferase family. The cofactor is Mg(2+).

Its subcellular location is the cytoplasm. The enzyme catalyses RNA(n+1) + phosphate = RNA(n) + a ribonucleoside 5'-diphosphate. Involved in mRNA degradation. Catalyzes the phosphorolysis of single-stranded polyribonucleotides processively in the 3'- to 5'-direction. The protein is Polyribonucleotide nucleotidyltransferase of Thermotoga neapolitana (strain ATCC 49049 / DSM 4359 / NBRC 107923 / NS-E).